A 336-amino-acid chain; its full sequence is UDP-N-acetylenolpyruvoylglucosamine reductase (336 aa).

One can recognise an FAD-binding PCMH-type domain in the interval 1–178 (MAHSLQTLHT…TTVHLALPKE (178 aa)). Arg154 is a catalytic residue. Residue Ser222 is the Proton donor of the active site. Residue Glu318 is part of the active site.

Belongs to the MurB family. FAD is required as a cofactor.

It is found in the cytoplasm. It carries out the reaction UDP-N-acetyl-alpha-D-muramate + NADP(+) = UDP-N-acetyl-3-O-(1-carboxyvinyl)-alpha-D-glucosamine + NADPH + H(+). The protein operates within cell wall biogenesis; peptidoglycan biosynthesis. Cell wall formation. This Pseudoalteromonas translucida (strain TAC 125) protein is UDP-N-acetylenolpyruvoylglucosamine reductase.